We begin with the raw amino-acid sequence, 179 residues long: ATP synthase subunit delta (179 aa).

It belongs to the ATPase delta chain family. In terms of assembly, F-type ATPases have 2 components, F(1) - the catalytic core - and F(0) - the membrane proton channel. F(1) has five subunits: alpha(3), beta(3), gamma(1), delta(1), epsilon(1). F(0) has three main subunits: a(1), b(2) and c(10-14). The alpha and beta chains form an alternating ring which encloses part of the gamma chain. F(1) is attached to F(0) by a central stalk formed by the gamma and epsilon chains, while a peripheral stalk is formed by the delta and b chains.

The protein localises to the cell membrane. Functionally, f(1)F(0) ATP synthase produces ATP from ADP in the presence of a proton or sodium gradient. F-type ATPases consist of two structural domains, F(1) containing the extramembraneous catalytic core and F(0) containing the membrane proton channel, linked together by a central stalk and a peripheral stalk. During catalysis, ATP synthesis in the catalytic domain of F(1) is coupled via a rotary mechanism of the central stalk subunits to proton translocation. This protein is part of the stalk that links CF(0) to CF(1). It either transmits conformational changes from CF(0) to CF(1) or is implicated in proton conduction. In Clostridium botulinum (strain Langeland / NCTC 10281 / Type F), this protein is ATP synthase subunit delta.